The primary structure comprises 59 residues: Potassium channel toxin alpha-KTx 1.12 (59 aa).

Positions Met-1–Ala-22 are cleaved as a signal peptide. Pyrrolidone carboxylic acid is present on Gln-23. 3 cysteine pairs are disulfide-bonded: Cys-29–Cys-50, Cys-35–Cys-55, and Cys-39–Cys-57. The interval Gly-48–Cys-55 is interaction with Ca(2+)-activated K(+) channels.

This sequence belongs to the short scorpion toxin superfamily. Potassium channel inhibitor family. Alpha-KTx 01 subfamily. In terms of tissue distribution, expressed by the venom gland.

It is found in the secreted. Functionally, potent selective inhibitor of high conductance (maxi-K), different medium and small conductance calcium-activated potassium channels (KCa1.1/KCNMA1 and others), as well as a voltage-dependent potassium channel (Kv1.3/KCNA3&gt;Kv1.2/KCNA2&gt;Kv1.6/KCNA3&gt;&gt;Shaker/Sh). It blocks channel activity by a simple bimolecular inhibition process. In terms of biological role, has a pH-specific antimicrobial activity against bacteria (B.subtilis, E.coli and S.aureus) and the fungus C.albicans. The chain is Potassium channel toxin alpha-KTx 1.12 from Leiurus hebraeus (Hebrew deathstalker scorpion).